Consider the following 413-residue polypeptide: Aspartate kinase (413 aa).

2 consecutive ACT domains span residues 267 to 341 and 347 to 413; these read LTIR…GDTK and IVGV…RQGE.

This sequence belongs to the aspartokinase family. Homotrimer. In the presence of inhibitory amino acids the Stokes radius of the protein increases, suggesting its oligomeric state may change.

The protein localises to the cytoplasm. It carries out the reaction L-aspartate + ATP = 4-phospho-L-aspartate + ADP. It participates in amino-acid biosynthesis; L-lysine biosynthesis via DAP pathway; (S)-tetrahydrodipicolinate from L-aspartate: step 1/4. Its pathway is amino-acid biosynthesis; L-methionine biosynthesis via de novo pathway; L-homoserine from L-aspartate: step 1/3. The protein operates within amino-acid biosynthesis; L-threonine biosynthesis; L-threonine from L-aspartate: step 1/5. Activated by L-lysine, L-methionine, and L-isoleucine. L-threonine, at low concentrations, is a mild activator and has a weak inhibitory effect only at concentrations over 10 mM. Strongly feedback inhibited by the concerted combination of L-lysine and L-threonine and slightly feedback inhibited by the concerted combination of L-threonine and L-methionine. Activated by the combination of L-methionine and L-lysine, L-methionine and L-isoleucine and L-lysine and L-isoleucine. Functionally, involved in the biosynthesis of L-aspartate-beta-semialdehyde which is a central intermediate in the biosynthesis of different amino acids (L-lysine, L-methionine, L-threonine). Catalyzes the phosphorylation of the beta-carboxyl group of L-aspartate to yield 4-phospho-L-aspartate. The chain is Aspartate kinase from Pseudomonas fluorescens (strain SBW25).